Reading from the N-terminus, the 581-residue chain is Protein LYRIC (581 aa).

Residues 1–49 (MAARSWQDELAQQAEEGSARLRELLSVGLGFLRTELGLDLGLEPKRYPS) lie on the Lumenal side of the membrane. The segment at 1 to 71 (MAARSWQDEL…LLLFLLGYGW (71 aa)) is activation of NF-kappa-B. A helical transmembrane segment spans residues 50-70 (WVILVGTGALGLLLLFLLGYG). Residues 71–581 (WAAACAGARK…KKKKKARRET (511 aa)) are Cytoplasmic-facing. An interaction with BCCIP region spans residues 72 to 168 (AAACAGARKK…EKSKKNKKKS (97 aa)). The tract at residues 77–221 (GARKKRRSPP…DSGSLDSTIP (145 aa)) is disordered. Residues 100–204 (EDPAQLKNLR…ISHREKRQQR (105 aa)) are interaction with RELA. Residues 108–126 (LRSEEQKKKNRKKLPEKPK) show a composition bias toward basic and acidic residues. Thr142 is modified (phosphothreonine). The segment covering 159–168 (EKSKKNKKKS) has biased composition (basic residues). Phosphoserine is present on Ser179. Positions 197 to 207 (HREKRQQRKRD) are enriched in basic residues. Phosphoserine occurs at positions 215 and 250. Lys263 is subject to N6-acetyllysine. The interval 280–581 (VNGGGWSEKS…KKKKKARRET (302 aa)) is disordered. 3 positions are modified to phosphoserine: Ser297, Ser305, and Ser310. Residues 318–331 (QSAWTQDPGDTNAN) are compositionally biased toward polar residues. Phosphoserine occurs at positions 343 and 368. 2 stretches are compositionally biased toward polar residues: residues 353–371 (EPVS…SRNQ) and 382–393 (NGLSSADPSSDW). Residues 380 to 442 (GLNGLSSADP…EGALPTGKSK (63 aa)) are lung-homing for mammary tumors. Phosphoserine is present on residues Ser414 and Ser425. Positions 421–433 (DQKDSDDDKEKGE) are enriched in basic and acidic residues. Residues 440-450 (KSKKKKKKKKK) are compositionally biased toward basic residues. Residues Ser456, Ser477, Ser493, and Ser495 each carry the phosphoserine modification. 2 stretches are compositionally biased toward polar residues: residues 519–535 (PSVT…SSQV) and 548–567 (NAKQ…NWES). The residue at position 567 (Ser567) is a Phosphoserine. Residues 570 to 581 (QIKKKKKARRET) show a composition bias toward basic residues.

As to quaternary structure, interacts with BCCIP, CREBBP/CBP and RELA/p65. Widely expressed, with highest levels in liver, kidney, prostate and small intestine. Not detected in endothelial cells.

It is found in the endoplasmic reticulum membrane. The protein resides in the nucleus membrane. The protein localises to the cell junction. Its subcellular location is the tight junction. It localises to the nucleus. It is found in the nucleolus. The protein resides in the cytoplasm. The protein localises to the perinuclear region. In terms of biological role, down-regulates SLC1A2/EAAT2 promoter activity when expressed ectopically. Activates the nuclear factor kappa-B (NF-kappa-B) transcription factor. Promotes anchorage-independent growth of immortalized melanocytes and astrocytes which is a key component in tumor cell expansion. Promotes lung metastasis and also has an effect on bone and brain metastasis, possibly by enhancing the seeding of tumor cells to the target organ endothelium. Induces chemoresistance. The polypeptide is Protein LYRIC (Mtdh) (Rattus norvegicus (Rat)).